Here is a 78-residue protein sequence, read N- to C-terminus: uncharacterized protein (78 aa).

The segment at 1-28 (MGGGNAQKSAMARAKNLEKAKAAGKGSQ) is disordered.

This is an uncharacterized protein from Arabidopsis thaliana (Mouse-ear cress).